We begin with the raw amino-acid sequence, 157 residues long: Crossover junction endodeoxyribonuclease RuvC (157 aa).

Residues aspartate 7, glutamate 67, and aspartate 139 contribute to the active site. Aspartate 7, glutamate 67, and aspartate 139 together coordinate Mg(2+).

Belongs to the RuvC family. Homodimer which binds Holliday junction (HJ) DNA. The HJ becomes 2-fold symmetrical on binding to RuvC with unstacked arms; it has a different conformation from HJ DNA in complex with RuvA. In the full resolvosome a probable DNA-RuvA(4)-RuvB(12)-RuvC(2) complex forms which resolves the HJ. The cofactor is Mg(2+).

It is found in the cytoplasm. The catalysed reaction is Endonucleolytic cleavage at a junction such as a reciprocal single-stranded crossover between two homologous DNA duplexes (Holliday junction).. In terms of biological role, the RuvA-RuvB-RuvC complex processes Holliday junction (HJ) DNA during genetic recombination and DNA repair. Endonuclease that resolves HJ intermediates. Cleaves cruciform DNA by making single-stranded nicks across the HJ at symmetrical positions within the homologous arms, yielding a 5'-phosphate and a 3'-hydroxyl group; requires a central core of homology in the junction. The consensus cleavage sequence is 5'-(A/T)TT(C/G)-3'. Cleavage occurs on the 3'-side of the TT dinucleotide at the point of strand exchange. HJ branch migration catalyzed by RuvA-RuvB allows RuvC to scan DNA until it finds its consensus sequence, where it cleaves and resolves the cruciform DNA. The protein is Crossover junction endodeoxyribonuclease RuvC of Prochlorococcus marinus (strain MIT 9301).